The primary structure comprises 113 residues: Nitrogenase vanadium-iron protein delta chain (113 aa).

In terms of assembly, hexamer of two alpha, two beta, and two delta chains. Requires iron-sulfur cluster as cofactor. It depends on vanadium cation as a cofactor.

It catalyses the reaction N2 + 8 reduced [2Fe-2S]-[ferredoxin] + 16 ATP + 16 H2O = H2 + 8 oxidized [2Fe-2S]-[ferredoxin] + 2 NH4(+) + 16 ADP + 16 phosphate + 6 H(+). The key enzymatic reactions in nitrogen fixation are catalyzed by the nitrogenase complex, which has 2 components: the iron protein (component 2) and a component 1 which is either a molybdenum-iron protein, a vanadium-iron, or an iron-iron protein. In Azotobacter salinestris, this protein is Nitrogenase vanadium-iron protein delta chain (vnfG).